The following is a 282-amino-acid chain: Chlorite dismutase (282 aa).

Residues 1–31 (MTNLSIHNFKLSLVAAVIGSAMVMTSSPVAA) form the signal peptide. Residue Glu104 coordinates Ca(2+). A heme-binding site is contributed by His204. Residue Arg217 is the Proton acceptor of the active site. Residues Asp226 and Thr265 each contribute to the Ca(2+) site.

This sequence belongs to the chlorite dismutase family. In terms of assembly, homopentamer. Heme b serves as cofactor.

It is found in the periplasm. It catalyses the reaction chloride + O2 = chlorite. In terms of biological role, catalyzes the heme-dependent decomposition of chlorite to O(2) and chloride with high efficiency and specificity. Used to detoxify chlorite, a by-product of the reduction of perchlorate, a primarily anthropogenic pollutant, in perchlorate-respiring bacteria. This is Chlorite dismutase from Dechloromonas aromatica (strain RCB).